The sequence spans 429 residues: Zinc finger protein 385C (429 aa).

The Matrin-type 1 zinc-finger motif lies at 77-107 (ISCNICHLRFNSANQAEAHYKGHRHARKLKA). Disordered stretches follow at residues 109-224 (EAAK…GRGE), 258-295 (GHQGAPRRGRGRPVSRGGTGHKTKRVIGNRGGRQGPSP), and 311-340 (QLKQHMSSRRHKDRLAGKPPKSSSQHNKLQ). Over residues 125 to 146 (TVVSSASPPASGSPGTPQSKGP) the composition is skewed to low complexity. Residues 147–162 (ASPPLGPSLQLPPTPD) are compositionally biased toward pro residues. A compositionally biased stretch (low complexity) spans 181 to 193 (CDAAASSSSSSCP). Residues 225 to 259 (KGRLYCPTCKVTVNSASQLQAHNTGAKHRWMVEGH) form a Matrin-type 2 zinc finger. A compositionally biased stretch (basic residues) spans 262 to 284 (APRRGRGRPVSRGGTGHKTKRVI). The Matrin-type 3 zinc finger occupies 297-327 (FHCALCQLHVNSETQLKQHMSSRRHKDRLAG).

It localises to the nucleus. This chain is Zinc finger protein 385C, found in Mus musculus (Mouse).